The sequence spans 290 residues: Coiled-coil domain-containing protein 137 (290 aa).

Disordered regions lie at residues 1 to 92, 98 to 117, 139 to 181, and 269 to 290; these read MARP…EAQV, LEKEAKGEEPDIAVPKFKQR, LSKN…EARA, and RQEMTPAQPPGSSFQRQGHACL. Residues 20-39 show a composition bias toward low complexity; that stretch reads SGQPQGRRQQQAQGQQRSAS. The segment covering 56–79 has biased composition (basic and acidic residues); the sequence is KNQDEQEIPFRLREIMRSRQEMKK. Residues 66-89 are a coiled coil; that stretch reads RLREIMRSRQEMKKTLSNKKRKKE. Basic and acidic residues predominate over residues 154–163; sequence PKKEKSERKK. Residues 155–192 adopt a coiled-coil conformation; sequence KKEKSERKKAFQKRRLEKAQRKREARAVDRLEQELLKD. Over residues 164 to 178 the composition is skewed to basic residues; that stretch reads AFQKRRLEKAQRKRE.

Its subcellular location is the chromosome. The polypeptide is Coiled-coil domain-containing protein 137 (Ccdc137) (Mus musculus (Mouse)).